A 556-amino-acid chain; its full sequence is Membrane protein insertase YidC (556 aa).

Residues 5–25 (TLTAIVLSFVLLTAFQFYMAW) form a helical membrane-spanning segment. The disordered stretch occupies residues 36–74 (QVQSGESSAPAPLASTAPVADALPPPVEGMAGSAPQQAM). Over residues 42-55 (SSAPAPLASTAPVA) the composition is skewed to low complexity. The next 4 membrane-spanning stretches (helical) occupy residues 370–390 (NYGV…FPLA), 441–461 (LPIL…FLSV), 468–488 (FMLW…PLLM), and 510–530 (IMMF…SGLV).

This sequence belongs to the OXA1/ALB3/YidC family. Type 1 subfamily. Interacts with the Sec translocase complex via SecD. Specifically interacts with transmembrane segments of nascent integral membrane proteins during membrane integration.

The protein localises to the cell inner membrane. Its function is as follows. Required for the insertion and/or proper folding and/or complex formation of integral membrane proteins into the membrane. Involved in integration of membrane proteins that insert both dependently and independently of the Sec translocase complex, as well as at least some lipoproteins. Aids folding of multispanning membrane proteins. This chain is Membrane protein insertase YidC, found in Magnetococcus marinus (strain ATCC BAA-1437 / JCM 17883 / MC-1).